Consider the following 277-residue polypeptide: NH(3)-dependent NAD(+) synthetase (277 aa).

An ATP-binding site is contributed by 36-43; it reads GLSGGIDS. A Mg(2+)-binding site is contributed by Asp-42. Arg-118 serves as a coordination point for deamido-NAD(+). Position 138 (Thr-138) interacts with ATP. A Mg(2+)-binding site is contributed by Glu-143. The ATP site is built by Lys-167 and Ser-189.

This sequence belongs to the NAD synthetase family. In terms of assembly, homodimer.

The catalysed reaction is deamido-NAD(+) + NH4(+) + ATP = AMP + diphosphate + NAD(+) + H(+). Its pathway is cofactor biosynthesis; NAD(+) biosynthesis; NAD(+) from deamido-NAD(+) (ammonia route): step 1/1. Functionally, catalyzes the ATP-dependent amidation of deamido-NAD to form NAD. Uses ammonia as a nitrogen source. The polypeptide is NH(3)-dependent NAD(+) synthetase (Chlorobium phaeobacteroides (strain DSM 266 / SMG 266 / 2430)).